The sequence spans 97 residues: Sperm protein associated with the nucleus on the X chromosome A (97 aa).

A disordered region spans residues 1–49; that stretch reads MDKQSSAGGVKRSVPCDSNEANEMMPETPTGDSDPQPAPKKMKTSESST. The Nuclear localization signal signature appears at 37–45; that stretch reads PAPKKMKTS.

This sequence belongs to the SPAN-X family. In terms of tissue distribution, detected in testis and sperm.

The protein localises to the cytoplasm. It localises to the nucleus. In Homo sapiens (Human), this protein is Sperm protein associated with the nucleus on the X chromosome A.